We begin with the raw amino-acid sequence, 324 residues long: Germ cell-specific gene 1 protein (324 aa).

4 helical membrane-spanning segments follow: residues 15–35 (TFIS…SLLS), 127–147 (LSLG…LLLL), 164–184 (AFAA…HMLY), and 208–228 (WAFY…VTTF).

The protein belongs to the GSG1 family. In terms of assembly, interacts with PAPOLB. In terms of tissue distribution, expressed in spermatogenic cells (at protein level). Expressed in germ cells within the testis from day 21 onwards.

The protein resides in the endoplasmic reticulum membrane. Its function is as follows. May cause the redistribution of PAPOLB from the cytosol to the endoplasmic reticulum. This chain is Germ cell-specific gene 1 protein (Gsg1), found in Mus musculus (Mouse).